The primary structure comprises 269 residues: Monofunctional glycosyltransferase (269 aa).

Residues 46–66 traverse the membrane as a helical segment; that stretch reads ILLTILIIIALFIGIMYFLST.

The protein belongs to the glycosyltransferase 51 family.

It localises to the cell membrane. It catalyses the reaction [GlcNAc-(1-&gt;4)-Mur2Ac(oyl-L-Ala-gamma-D-Glu-L-Lys-D-Ala-D-Ala)](n)-di-trans,octa-cis-undecaprenyl diphosphate + beta-D-GlcNAc-(1-&gt;4)-Mur2Ac(oyl-L-Ala-gamma-D-Glu-L-Lys-D-Ala-D-Ala)-di-trans,octa-cis-undecaprenyl diphosphate = [GlcNAc-(1-&gt;4)-Mur2Ac(oyl-L-Ala-gamma-D-Glu-L-Lys-D-Ala-D-Ala)](n+1)-di-trans,octa-cis-undecaprenyl diphosphate + di-trans,octa-cis-undecaprenyl diphosphate + H(+). It functions in the pathway cell wall biogenesis; peptidoglycan biosynthesis. Peptidoglycan polymerase that catalyzes glycan chain elongation using lipid-linked disaccharide-pentapeptide as the substrate. The protein is Monofunctional glycosyltransferase of Staphylococcus aureus (strain Newman).